The primary structure comprises 304 residues: uncharacterized protein (304 aa).

Catalysis depends on charge relay system residues threonine 58 and tyrosine 121. Tyrosine 147 functions as the Proton donor in the catalytic mechanism. The active-site Schiff-base intermediate with substrate is lysine 175.

This sequence belongs to the DapA family. Homotetramer.

Its subcellular location is the cytoplasm. This is an uncharacterized protein from Halobacterium salinarum (strain ATCC 29341 / DSM 671 / R1).